The primary structure comprises 78 residues: Small ribosomal subunit protein bS18 (78 aa).

It belongs to the bacterial ribosomal protein bS18 family. As to quaternary structure, part of the 30S ribosomal subunit. Forms a tight heterodimer with protein bS6.

Binds as a heterodimer with protein bS6 to the central domain of the 16S rRNA, where it helps stabilize the platform of the 30S subunit. The protein is Small ribosomal subunit protein bS18 of Limosilactobacillus fermentum (strain NBRC 3956 / LMG 18251) (Lactobacillus fermentum).